A 314-amino-acid polypeptide reads, in one-letter code: MVKLLVAKILCMVGVFFFMLLGSLLPVKIIETDFEKAHRSKKILSLCNTFGGGVFLATCFNALLPAVREKLQKVLSLGHISTDYPLAETILLLGFFMTVFLEQLILTFRKEKPSFIDLETFNAGSDVGSDSEYESPFMGGARGHALYVEPHGHGPSLSVQGLSRASPVRLLSLAFALSAHSVFEGLALGLQEEGEKVVSLFVGVAVHETLVAVALGISMARSAMPLRDAAKLAVTVSAMIPLGIGLGLGIESAQGVPGSVASVLLQGLAGGTFLFITFLEILAKELEEKSDRLLKVLFLVLGYTVLAGMVFLKW.

The Extracellular segment spans residues Met-1 to Lys-3. Residues Leu-4 to Leu-24 form a helical membrane-spanning segment. At Leu-25–Lys-42 the chain is on the cytoplasmic side. A helical membrane pass occupies residues Ile-43–Leu-63. Over Leu-64 to Pro-85 the chain is Extracellular. A helical membrane pass occupies residues Leu-86–Leu-106. Residues Thr-107–Arg-169 lie on the Cytoplasmic side of the membrane. 2 positions are modified to phosphoserine: Ser-125 and Ser-129. Residues Leu-170–Leu-190 traverse the membrane as a helical segment. Residues Gln-191–Lys-196 lie on the Extracellular side of the membrane. A helical transmembrane segment spans residues Val-197–Ile-217. The Cytoplasmic segment spans residues Ser-218–Ala-229. Residues Ala-230–Ile-250 form a helical membrane-spanning segment. At Glu-251 to Ser-262 the chain is on the extracellular side. A helical transmembrane segment spans residues Val-263–Ala-283. At Lys-284–Arg-292 the chain is on the cytoplasmic side. Residues Leu-293–Lys-313 form a helical membrane-spanning segment. Residue Trp-314 is a topological domain, extracellular.

The protein belongs to the ZIP transporter (TC 2.A.5) family.

It is found in the cell membrane. The protein resides in the apical cell membrane. It catalyses the reaction Zn(2+)(in) = Zn(2+)(out). Transporter for the divalent cation Zn(2+). Mediates the influx of Zn(2+) into cells from extracellular space. Controls Zn(2+) accumulation into dentate gyrus granule cells in the hippocampus. Mediates Zn(2+) reuptake from the secreted milk within the alveolar lumen. The polypeptide is Zinc transporter ZIP3 (Homo sapiens (Human)).